We begin with the raw amino-acid sequence, 462 residues long: Argininosuccinate lyase (462 aa).

Belongs to the lyase 1 family. Argininosuccinate lyase subfamily.

Its subcellular location is the cytoplasm. The catalysed reaction is 2-(N(omega)-L-arginino)succinate = fumarate + L-arginine. It participates in amino-acid biosynthesis; L-arginine biosynthesis; L-arginine from L-ornithine and carbamoyl phosphate: step 3/3. The sequence is that of Argininosuccinate lyase from Caldicellulosiruptor saccharolyticus (strain ATCC 43494 / DSM 8903 / Tp8T 6331).